The following is a 458-amino-acid chain: BPI fold-containing family B member 2 (458 aa).

An N-terminal signal peptide occupies residues 1–20; the sequence is MAWASRLGLLLALLLPVVGA. The residue at position 52 (Thr52) is a Phosphothreonine; by FAM20C. At Ser60 the chain carries Phosphoserine; by FAM20C. Asn96, Asn151, Asn293, and Asn332 each carry an N-linked (GlcNAc...) asparagine glycan. Residues Cys137 and Cys174 are joined by a disulfide bond.

The protein belongs to the BPI/LBP/Plunc superfamily. BPI/LBP family. As to expression, highly expressed in tonsils, especially in hypertrophic tonsils. Detected at very low levels in fetal liver.

It localises to the secreted. The protein is BPI fold-containing family B member 2 (BPIFB2) of Homo sapiens (Human).